The sequence spans 79 residues: Serine protease inhibitor Kazal-type 1 (79 aa).

The first 23 residues, 1-23 (MKVASIFLLTALVLMSLSGNSGA), serve as a signal peptide directing secretion. The Kazal-like domain occupies 26-79 (LGREAKCTNEVNGCPRIYNPVCGTDGVTYSNECLLCMENKERQTPVLIQKSGPC). Disulfide bonds link Cys32/Cys61, Cys39/Cys58, and Cys47/Cys79.

It is found in the secreted. Functionally, serine protease inhibitor which exhibits anti-trypsin activity. In the pancreas, protects against trypsin-catalyzed premature activation of zymogens. In the male reproductive tract, binds to sperm heads where it modulates sperm capacitance by inhibiting calcium uptake and nitrogen oxide (NO) production. This chain is Serine protease inhibitor Kazal-type 1 (SPINK1), found in Bos taurus (Bovine).